The chain runs to 259 residues: Hydroxyethylthiazole kinase (259 aa).

Methionine 37 lines the substrate pocket. ATP-binding residues include arginine 113 and threonine 158. Glycine 185 is a substrate binding site.

It belongs to the Thz kinase family. The cofactor is Mg(2+).

It carries out the reaction 5-(2-hydroxyethyl)-4-methylthiazole + ATP = 4-methyl-5-(2-phosphooxyethyl)-thiazole + ADP + H(+). The protein operates within cofactor biosynthesis; thiamine diphosphate biosynthesis; 4-methyl-5-(2-phosphoethyl)-thiazole from 5-(2-hydroxyethyl)-4-methylthiazole: step 1/1. In terms of biological role, catalyzes the phosphorylation of the hydroxyl group of 4-methyl-5-beta-hydroxyethylthiazole (THZ). This chain is Hydroxyethylthiazole kinase, found in Helicobacter pylori (strain ATCC 700392 / 26695) (Campylobacter pylori).